The sequence spans 163 residues: Peptide methionine sulfoxide reductase MsrA (163 aa).

Cys-10 is a catalytic residue.

Belongs to the MsrA Met sulfoxide reductase family.

The catalysed reaction is L-methionyl-[protein] + [thioredoxin]-disulfide + H2O = L-methionyl-(S)-S-oxide-[protein] + [thioredoxin]-dithiol. The enzyme catalyses [thioredoxin]-disulfide + L-methionine + H2O = L-methionine (S)-S-oxide + [thioredoxin]-dithiol. Its function is as follows. Has an important function as a repair enzyme for proteins that have been inactivated by oxidation. Catalyzes the reversible oxidation-reduction of methionine sulfoxide in proteins to methionine. This is Peptide methionine sulfoxide reductase MsrA from Ruthia magnifica subsp. Calyptogena magnifica.